The chain runs to 885 residues: DNA mismatch repair protein MutS (885 aa).

Gly626–Ser633 serves as a coordination point for ATP.

The protein belongs to the DNA mismatch repair MutS family.

In terms of biological role, this protein is involved in the repair of mismatches in DNA. It is possible that it carries out the mismatch recognition step. This protein has a weak ATPase activity. This is DNA mismatch repair protein MutS from Burkholderia cenocepacia (strain ATCC BAA-245 / DSM 16553 / LMG 16656 / NCTC 13227 / J2315 / CF5610) (Burkholderia cepacia (strain J2315)).